Consider the following 280-residue polypeptide: Mesaconyl-C(4)-CoA hydratase (280 aa).

The protein belongs to the HTD2 family. In terms of assembly, homodimer.

It catalyses the reaction (3S)-citramalyl-CoA = 3-methylfumaryl-CoA + H2O. Inhibited by 3-methylfumaryl-CoA concentrations above 0.3 mM. Involved in the glyoxylate assimilation cycle used to regenerate acetyl-CoA and produce pyruvate as universal precursor for biosynthesis. Catalyzes the hydration of 3-methylfumaryl-CoA (mesaconyl-C4-CoA) to (3S)-citramalyl-CoA. This Chloroflexus aurantiacus (strain ATCC 29366 / DSM 635 / J-10-fl) protein is Mesaconyl-C(4)-CoA hydratase (meh).